The chain runs to 279 residues: Nitrate import permease protein NrtB (279 aa).

5 helical membrane passes run 25 to 45, 91 to 111, 149 to 169, 200 to 220, and 249 to 269; these read FLPYVVCLPIFLAIWQVISAI, VAIGYLLAACTGILVGGVLGM, AIFVIFITAIWPIIINTAVGI, VPYVFAGLRIAVGLAWLAIVA, and IILAIFYVGLVGLSLDRLVAW. The ABC transmembrane type-1 domain occupies 84-267; that stretch reads ILISLQRVAI…LVGLSLDRLV (184 aa).

The protein belongs to the binding-protein-dependent transport system permease family. CysTW subfamily. In terms of assembly, the complex is composed of two ATP-binding proteins (NrtC and NrtD), two transmembrane proteins (NrtB) and a solute-binding protein (NrtA).

Its subcellular location is the cell inner membrane. Functionally, part of the ABC transporter complex NrtABCD involved in nitrate uptake. The complex is probably also involved in nitrite transport. Probably responsible for the translocation of the substrate across the membrane. The polypeptide is Nitrate import permease protein NrtB (Synechococcus elongatus (strain ATCC 33912 / PCC 7942 / FACHB-805) (Anacystis nidulans R2)).